We begin with the raw amino-acid sequence, 545 residues long: Thermosome subunit beta (545 aa).

It belongs to the TCP-1 chaperonin family. As to quaternary structure, forms a Heterooligomeric complex of two stacked eight-membered rings.

Molecular chaperone; binds unfolded polypeptides in vitro, and has a weak ATPase activity. The sequence is that of Thermosome subunit beta (thsB) from Thermococcus sp. (strain KS-8).